Consider the following 185-residue polypeptide: Ribose 1,5-bisphosphate phosphokinase PhnN (185 aa).

10 to 17 provides a ligand contact to ATP; it reads GPSGSGKD.

The protein belongs to the ribose 1,5-bisphosphokinase family.

It carries out the reaction alpha-D-ribose 1,5-bisphosphate + ATP = 5-phospho-alpha-D-ribose 1-diphosphate + ADP. The protein operates within metabolic intermediate biosynthesis; 5-phospho-alpha-D-ribose 1-diphosphate biosynthesis; 5-phospho-alpha-D-ribose 1-diphosphate from D-ribose 5-phosphate (route II): step 3/3. Catalyzes the phosphorylation of ribose 1,5-bisphosphate to 5-phospho-D-ribosyl alpha-1-diphosphate (PRPP). This chain is Ribose 1,5-bisphosphate phosphokinase PhnN, found in Pseudomonas paraeruginosa (strain DSM 24068 / PA7) (Pseudomonas aeruginosa (strain PA7)).